The following is a 73-amino-acid chain: Neurotoxin Cex13 (73 aa).

Positions 1–7 (ATGNVWA) are cleaved as a signal peptide. Residues 8–71 (KDGYLVIIKT…TWPLPDKTCG (64 aa)) enclose the LCN-type CS-alpha/beta domain. 4 disulfide bridges follow: cysteine 19/cysteine 70, cysteine 23/cysteine 46, cysteine 32/cysteine 51, and cysteine 36/cysteine 53. Cysteine 70 carries the post-translational modification Cysteine amide. Residues 71–73 (GTK) constitute a propeptide that is removed on maturation.

This sequence belongs to the long (4 C-C) scorpion toxin superfamily. Sodium channel inhibitor family. Beta subfamily. In terms of tissue distribution, expressed by the venom gland.

The protein resides in the secreted. In terms of biological role, beta toxins bind voltage-independently at site-4 of sodium channels (Nav) and shift the voltage of activation toward more negative potentials thereby affecting sodium channel activation and promoting spontaneous and repetitive firing. The sequence is that of Neurotoxin Cex13 from Centruroides exilicauda (Bark scorpion).